The chain runs to 65 residues: Large ribosomal subunit protein bL35 (65 aa).

Residues 1 to 10 (MPKMKTDRGA) show a composition bias toward basic and acidic residues. The disordered stretch occupies residues 1-24 (MPKMKTDRGAAKRFKKTGSGGFKC).

Belongs to the bacterial ribosomal protein bL35 family.

The protein is Large ribosomal subunit protein bL35 of Tolumonas auensis (strain DSM 9187 / NBRC 110442 / TA 4).